Consider the following 261-residue polypeptide: Imidazole glycerol phosphate synthase subunit HisF (261 aa).

Residues Asp-12 and Asp-131 contribute to the active site.

It belongs to the HisA/HisF family. In terms of assembly, heterodimer of HisH and HisF.

Its subcellular location is the cytoplasm. It catalyses the reaction 5-[(5-phospho-1-deoxy-D-ribulos-1-ylimino)methylamino]-1-(5-phospho-beta-D-ribosyl)imidazole-4-carboxamide + L-glutamine = D-erythro-1-(imidazol-4-yl)glycerol 3-phosphate + 5-amino-1-(5-phospho-beta-D-ribosyl)imidazole-4-carboxamide + L-glutamate + H(+). It participates in amino-acid biosynthesis; L-histidine biosynthesis; L-histidine from 5-phospho-alpha-D-ribose 1-diphosphate: step 5/9. Its function is as follows. IGPS catalyzes the conversion of PRFAR and glutamine to IGP, AICAR and glutamate. The HisF subunit catalyzes the cyclization activity that produces IGP and AICAR from PRFAR using the ammonia provided by the HisH subunit. The polypeptide is Imidazole glycerol phosphate synthase subunit HisF (Brucella anthropi (strain ATCC 49188 / DSM 6882 / CCUG 24695 / JCM 21032 / LMG 3331 / NBRC 15819 / NCTC 12168 / Alc 37) (Ochrobactrum anthropi)).